The sequence spans 74 residues: Translation initiation factor IF-1 (74 aa).

The S1-like domain maps to 1–72 (MGKEDVIRME…TRGRIVYRKK (72 aa)).

The protein belongs to the IF-1 family. Component of the 30S ribosomal translation pre-initiation complex which assembles on the 30S ribosome in the order IF-2 and IF-3, IF-1 and N-formylmethionyl-tRNA(fMet); mRNA recruitment can occur at any time during PIC assembly.

The protein resides in the cytoplasm. Its function is as follows. One of the essential components for the initiation of protein synthesis. Stabilizes the binding of IF-2 and IF-3 on the 30S subunit to which N-formylmethionyl-tRNA(fMet) subsequently binds. Helps modulate mRNA selection, yielding the 30S pre-initiation complex (PIC). Upon addition of the 50S ribosomal subunit IF-1, IF-2 and IF-3 are released leaving the mature 70S translation initiation complex. The sequence is that of Translation initiation factor IF-1 from Thermotoga petrophila (strain ATCC BAA-488 / DSM 13995 / JCM 10881 / RKU-1).